The sequence spans 213 residues: Ras-related protein Rab-25 (213 aa).

GTP contacts are provided by Ser21, Gly24, Lys25, Thr26, Asn27, Ser38, His39, Thr43, and Thr44. Residue Thr26 coordinates Mg(2+). 2 short sequence motifs (switch) span residues 35-49 (NEFS…GVEF) and 67-84 (DTAG…YYRG). Positions 44 and 67 each coordinate Mg(2+). Residues Gly70, Asn125, Lys126, Asp128, Ala156, and Leu157 each contribute to the GTP site. S-geranylgeranyl cysteine attachment occurs at residues Cys209 and Cys210. Residue Cys210 is modified to Cysteine methyl ester. The propeptide at 211-213 (INL) is removed in mature form.

Belongs to the small GTPase superfamily. Rab family. Interacts (GTP-bound form) with RAB11FIP1, RAB11FIP2, RAB11FIP3 and RAB11FIP4. Interacts (via the hypervariable C-terminal region) with ITGB1 (via the cytoplasmic region); the interaction is GTP-dependent. Interacts with ITGAV. Associates with the integrin alpha-V/beta-1 heterodimer. Interacts with VPS33B. Mg(2+) serves as cofactor. Expression is restricted to epithelial cells. Expressed in the gastrointestinal mucosa, (highest expression seen in the ileum and colon), kidney, and lung. A very minor and variable level of expression is seen in the splenic tissue.

The protein localises to the cell membrane. It is found in the cell projection. The protein resides in the pseudopodium membrane. Its subcellular location is the cytoplasmic vesicle. It catalyses the reaction GTP + H2O = GDP + phosphate + H(+). Regulated by guanine nucleotide exchange factors (GEFs) which promote the exchange of bound GDP for free GTP. Regulated by GTPase activating proteins (GAPs) which increase the GTP hydrolysis activity. Inhibited by GDP dissociation inhibitors (GDIs) which prevent Rab-GDP dissociation. Functionally, the small GTPases Rab are key regulators of intracellular membrane trafficking, from the formation of transport vesicles to their fusion with membranes. Rabs cycle between an inactive GDP-bound form and an active GTP-bound form that is able to recruit to membranes different set of downstream effectors directly responsible for vesicle formation, movement, tethering and fusion. RAB25 regulates epithelial cell differentiation, proliferation and survival, thereby playing key roles in tumorigenesis. Promotes invasive migration of cells in which it functions to localize and maintain integrin alpha-V/beta-1 at the tips of extending pseudopodia. Involved in the regulation of epithelial morphogenesis through the control of CLDN4 expression and localization at tight junctions. May selectively regulate the apical recycling pathway. Together with MYO5B regulates transcytosis. The polypeptide is Ras-related protein Rab-25 (RAB25) (Oryctolagus cuniculus (Rabbit)).